Consider the following 187-residue polypeptide: CASP-like protein 2 (187 aa).

The Cytoplasmic portion of the chain corresponds to 1 to 24; sequence MKVSAVETGEISQVSAPRKGMIRG. Residues 25–45 form a helical membrane-spanning segment; that stretch reads LSIMDFILRIVAAIGTLGSAL. At 46–72 the chain is on the extracellular side; the sequence is STGTTRETLPFTTQFVKFRAVFDDLPT. Residues 73-93 form a helical membrane-spanning segment; sequence FVFFVTSNSIVCGYLVLSLAL. At 94-108 the chain is on the cytoplasmic side; it reads SFFHIIRRSSAAKSR. A helical membrane pass occupies residues 109–129; the sequence is ILLVFLDTVMFGLLTTGAAAA. At 130 to 163 the chain is on the extracellular side; that stretch reads GTIVYVSHYGNVNANWFPFCGQYNHFCERISGSL. A helical transmembrane segment spans residues 164–184; it reads IGSFIAVVIFMIIILMSAVSI. Over 185-187 the chain is Cytoplasmic; it reads SKH.

It belongs to the Casparian strip membrane proteins (CASP) family. As to quaternary structure, homodimer and heterodimers.

The protein resides in the cell membrane. In Lotus japonicus (Lotus corniculatus var. japonicus), this protein is CASP-like protein 2.